A 248-amino-acid chain; its full sequence is ATP synthase subunit a, chloroplastic (248 aa).

5 consecutive transmembrane segments (helical) span residues 37–57 (AQVLITSWVVIVLLSGLAFVT), 96–116 (VPFIGTLFLFIFVSNWSGALF), 135–155 (INTTVALALLTSVAYFYAGLH), 200–220 (LVVAVLISLVPLVVPIPMMFL), and 221–241 (GLFTSAIQALIFATLAAAYIG).

This sequence belongs to the ATPase A chain family. F-type ATPases have 2 components, CF(1) - the catalytic core - and CF(0) - the membrane proton channel. CF(1) has five subunits: alpha(3), beta(3), gamma(1), delta(1), epsilon(1). CF(0) has four main subunits: a, b, b' and c.

The protein localises to the plastid. It localises to the chloroplast thylakoid membrane. Functionally, key component of the proton channel; it plays a direct role in the translocation of protons across the membrane. The chain is ATP synthase subunit a, chloroplastic from Psilotum nudum (Whisk fern).